The sequence spans 150 residues: MLDNPLAVRRAAMDLLARREHGRVELTRKLRKRGAPDELIDGALDRLAEEGLLSEARYLESFVAYRARAGYGPQRIREELGQRGLARGDIDQALRDSGIDWFEQLRETWQRKYAGRLPNDARERAQQGRFLAYRGYSLDMIGRLLRGCDE.

The protein belongs to the RecX family.

The protein resides in the cytoplasm. Its function is as follows. Modulates RecA activity. This chain is Regulatory protein RecX, found in Ectopseudomonas mendocina (strain ymp) (Pseudomonas mendocina).